Here is a 229-residue protein sequence, read N- to C-terminus: Aminodeoxyfutalosine nucleosidase (229 aa).

Glu13 serves as the catalytic Proton acceptor. Substrate-binding positions include Gly79, Ile153, and 173 to 174 (ME). Asp197 functions as the Proton donor in the catalytic mechanism.

The protein belongs to the PNP/UDP phosphorylase family. In terms of assembly, homodimer.

The enzyme catalyses 6-amino-6-deoxyfutalosine + H2O = dehypoxanthine futalosine + adenine. It catalyses the reaction S-adenosyl-L-homocysteine + H2O = S-(5-deoxy-D-ribos-5-yl)-L-homocysteine + adenine. The catalysed reaction is S-methyl-5'-thioadenosine + H2O = 5-(methylsulfanyl)-D-ribose + adenine. It carries out the reaction 5'-deoxyadenosine + H2O = 5-deoxy-D-ribose + adenine. It participates in quinol/quinone metabolism; menaquinone biosynthesis. Its pathway is amino-acid biosynthesis; L-methionine biosynthesis via salvage pathway; S-methyl-5-thio-alpha-D-ribose 1-phosphate from S-methyl-5'-thioadenosine (hydrolase route): step 1/2. Functionally, catalyzes the direct conversion of aminodeoxyfutalosine (AFL) into dehypoxanthine futalosine (DHFL) and adenine via the hydrolysis of the N-glycosidic bond; this reaction seems to represent an essential step in the menaquinone biosynthesis pathway in Campylobacter species. Also catalyzes the hydrolysis of 5'-methylthioadenosine (MTA) to adenine and 5'-methylthioribose. Can also probably use S-adenosylhomocysteine (SAH) as substrate, leading to adenine and S-ribosylhomocysteine. These other activities highlight the tremendous versatility of the enzyme, which also plays key roles in S-adenosylmethionine recycling and in the biosynthesis of the quorum-sensing molecule autoinducer-2. Shows negligible activity with futalosine (FL) as substrate. This is Aminodeoxyfutalosine nucleosidase (pfs) from Campylobacter jejuni subsp. jejuni serotype O:2 (strain ATCC 700819 / NCTC 11168).